The sequence spans 219 residues: Protein matrimony (219 aa).

Residues 74–99 are compositionally biased toward basic residues; the sequence is PPAKAHPHPHQHQHHHHHHKHIHRTQ. The disordered stretch occupies residues 74-104; that stretch reads PPAKAHPHPHQHQHHHHHHKHIHRTQLKPPP. Positions 159-219 constitute an SAM domain; the sequence is NHAANVEQIL…NRIMDVLQTL (61 aa).

As to quaternary structure, interacts with polo. Interacts with cort. In terms of processing, probably ubiquitinated: degraded during the oocyte-to-embryo transition by the anaphase promoting complex/cyclosome (APC/C) containing cort protein.

The protein localises to the nucleus. It is found in the chromosome. Functionally, polo kinase inhibitor required to maintain G2 arrest in the meiotic cell cycle in females. Holds heterochromatically paired homologs together from the end of pachytene until metaphase I. Haploinsufficient locus for homologous achiasmate segregation and may be required for the maintenance of heterochromatic pairings. The protein is Protein matrimony (mtrm) of Drosophila yakuba (Fruit fly).